A 1241-amino-acid polypeptide reads, in one-letter code: Putative urea carboxylase (1241 aa).

A Biotin carboxylation domain is found at 3 to 459 (ALKTLLIANR…LTKFLNNFEY (457 aa)). ATP-binding residues include Lys117 and Glu201. The ATP-grasp domain occupies 121-321 (RELATKAGVP…LVELMLRQAD (201 aa)). Residues 1159–1239 (EELLKDPEIT…EAGKPLMLVR (81 aa)) enclose the Biotinyl-binding domain. Lys1202 is subject to N6-biotinyllysine.

Biotin is required as a cofactor.

It catalyses the reaction urea + hydrogencarbonate + ATP = urea-1-carboxylate + ADP + phosphate + H(+). Its function is as follows. Involved in the utilization of lactams. Required for the conversion of exogenous 2-pyrrolidinone (gamma-butyrolactam) to endogenous gamma-amino-n-butyrate (GABA). The chain is Putative urea carboxylase (lamA) from Emericella nidulans (strain FGSC A4 / ATCC 38163 / CBS 112.46 / NRRL 194 / M139) (Aspergillus nidulans).